Reading from the N-terminus, the 295-residue chain is Protein gurken (295 aa).

Positions 1 to 26 (MMQIPFTRIFKVIFVLSTIVAVTDCC) are cleaved as a signal peptide. The Extracellular portion of the chain corresponds to 27–247 (SSRILLLREH…TAQRKVRMAH (221 aa)). 2 disordered regions span residues 78–111 (EASA…SIAA) and 124–175 (TDTW…NDKE). Polar residues predominate over residues 124–139 (TDTWLASESSTPITDS). Composition is skewed to low complexity over residues 140-152 (ETVT…THTG) and 159-171 (SSSS…TPSP). Residues 179–224 (QMLPCSEAYNTSFCLNGGHCFQHPMVNNTVFHSCLCVNDYDGERCA) enclose the EGF-like domain. 3 disulfides stabilise this stretch: Cys183/Cys198, Cys192/Cys212, and Cys214/Cys223. N-linked (GlcNAc...) asparagine glycans are attached at residues Asn188 and Asn205. Residues 215–245 (VNDYDGERCAYKSWNGDYIYSPPTAQRKVRM) are interaction with cni. The helical transmembrane segment at 248 to 268 (IVFSFPVLLMLSSLYVLFAAV) threads the bilayer. Over 269 to 295 (FMLRNVPDYRRKQQQLHLHKQRFFVRC) the chain is Cytoplasmic.

Interacts with cni. In terms of tissue distribution, expressed in nurse cells and oocyte up to oogenesis stage 7. Specifically accumulates in dorsal anterior corner of the oocyte during stages 9/10, at later stages expression is seen as an anterior ring. In stage 10 ovaries, it is concentrated between the oocyte nucleus and the adjacent oolemma. During vitellogenesis stage it can be detected at the oocyte surface, especially on the microvilli. It is also found at the microvilli covering the apical surface of the follicular epithelium and within follicle cells.

Its subcellular location is the cell membrane. Functionally, critical for defining the anterior-posterior and dorsal-ventral axes of the egg. May signal directly to dorsal follicle cells through the receptor torpedo (top). During oogenesis this signaling pathway instructs follicle cells to follow a dorsal pathway of development rather than the default ventral pathway. This is Protein gurken (grk) from Drosophila melanogaster (Fruit fly).